The sequence spans 159 residues: Small ribosomal subunit protein uS9 (159 aa).

It belongs to the universal ribosomal protein uS9 family.

The polypeptide is Small ribosomal subunit protein uS9 (Rickettsia peacockii (strain Rustic)).